The chain runs to 238 residues: tRNA (guanine-N(7)-)-methyltransferase (238 aa).

S-adenosyl-L-methionine-binding residues include glutamate 68, glutamate 93, aspartate 121, and aspartate 143. Residue aspartate 143 is part of the active site. Residues lysine 147, aspartate 179, and 216–219 contribute to the substrate site; that span reads TRYE.

This sequence belongs to the class I-like SAM-binding methyltransferase superfamily. TrmB family.

The enzyme catalyses guanosine(46) in tRNA + S-adenosyl-L-methionine = N(7)-methylguanosine(46) in tRNA + S-adenosyl-L-homocysteine. It participates in tRNA modification; N(7)-methylguanine-tRNA biosynthesis. In terms of biological role, catalyzes the formation of N(7)-methylguanine at position 46 (m7G46) in tRNA. The sequence is that of tRNA (guanine-N(7)-)-methyltransferase from Paramagnetospirillum magneticum (strain ATCC 700264 / AMB-1) (Magnetospirillum magneticum).